We begin with the raw amino-acid sequence, 102 residues long: Late embryogenesis abundant protein D-19 (102 aa).

The interval 1 to 102 is disordered; the sequence is MASEQYQAMR…IDESKFRTKN (102 aa). Residues 48-58 show a composition bias toward basic and acidic residues; sequence EGRHKGGETRK.

Belongs to the small hydrophilic plant seed protein family.

Its function is as follows. LEA proteins are late embryonic proteins abundant in higher plant seed embryos. There are two subsets of LEA proteins (5a and 5b), the first ones are expressed when the cotyledon weight reach 80 mg and the second set are expressed above 100 mg. The function of those proteins is not known. The protein is Late embryogenesis abundant protein D-19 of Gossypium hirsutum (Upland cotton).